Reading from the N-terminus, the 86-residue chain is Large ribosomal subunit protein uL23 (86 aa).

It belongs to the universal ribosomal protein uL23 family. As to quaternary structure, part of the 50S ribosomal subunit. Contacts protein L29.

Its function is as follows. Binds to 23S rRNA. One of the proteins that surrounds the polypeptide exit tunnel on the outside of the ribosome. This Aeropyrum pernix (strain ATCC 700893 / DSM 11879 / JCM 9820 / NBRC 100138 / K1) protein is Large ribosomal subunit protein uL23.